The chain runs to 209 residues: MTKGILGRKIGMTQVFAENGDLIPVTVIEAAPNVVLQKKTAENDGYEAIQLGFDDKREKLSNKPEKGHVAKAETAPKRFVKELRGVEMDAYEVGQEVKVEIFSAGEIVDVTGVSKGKGFQGAIKRHGQSRGPMSHGSRYHRRPGSMGPVDPNRVFKGKLLPGRMGGEQITVQNLEIVKVDAERNLLLIKGNVPGAKKSLITVKSAVKSK.

A disordered region spans residues 122–152 (AIKRHGQSRGPMSHGSRYHRRPGSMGPVDPN).

This sequence belongs to the universal ribosomal protein uL3 family. As to quaternary structure, part of the 50S ribosomal subunit. Forms a cluster with proteins L14 and L19. Interacts with RNA helicase CshA.

Functionally, one of the primary rRNA binding proteins, it binds directly near the 3'-end of the 23S rRNA, where it nucleates assembly of the 50S subunit. Strongly stimulates 23S rRNA precursor processing by mini-ribonuclease 3 (MrnC); 20-30% DMSO can replace L3, suggesting the protein may alter rRNA conformation. This chain is Large ribosomal subunit protein uL3, found in Bacillus subtilis (strain 168).